We begin with the raw amino-acid sequence, 214 residues long: Heat shock protein 30 (214 aa).

In terms of domain architecture, sHSP spans 66-183 (VPSSLTIQPV…AERVVPINCS (118 aa)). A disordered region spans residues 193 to 214 (SKTEGSITDTQKKQENTISKED). Basic and acidic residues predominate over residues 202 to 214 (TQKKQENTISKED).

Belongs to the small heat shock protein (HSP20) family.

In Oncorhynchus tshawytscha (Chinook salmon), this protein is Heat shock protein 30 (hsp30).